A 557-amino-acid chain; its full sequence is Glutamine--tRNA ligase (557 aa).

Residues 42 to 52 (PEPNGYLHIGH) carry the 'HIGH' region motif. ATP-binding positions include 43 to 45 (EPN) and 49 to 55 (HIGHAKS). L-glutamine contacts are provided by D75 and Y220. Residues T239 and 270–271 (RL) each bind ATP. The short motif at 277–281 (LTSKR) is the 'KMSKS' region element.

It belongs to the class-I aminoacyl-tRNA synthetase family. Monomer.

It localises to the cytoplasm. The catalysed reaction is tRNA(Gln) + L-glutamine + ATP = L-glutaminyl-tRNA(Gln) + AMP + diphosphate. The polypeptide is Glutamine--tRNA ligase (Haemophilus influenzae (strain ATCC 51907 / DSM 11121 / KW20 / Rd)).